The primary structure comprises 85 residues: uncharacterized protein (85 aa).

The next 3 helical transmembrane spans lie at Leu-4–Ala-24, Ser-27–Glu-47, and Arg-61–Ala-81.

Its subcellular location is the cell membrane. This is an uncharacterized protein from Pseudomonas aeruginosa (strain ATCC 15692 / DSM 22644 / CIP 104116 / JCM 14847 / LMG 12228 / 1C / PRS 101 / PAO1).